Consider the following 318-residue polypeptide: Taste receptor type 2 member 60 (318 aa).

Residues 1–7 (MNGDHMV) are Extracellular-facing. The helical transmembrane segment at 8–28 (LGSSVTDKKAIILVTILLLLR) threads the bilayer. Residues 29–40 (LVAIAGNGFITA) are Cytoplasmic-facing. A helical transmembrane segment spans residues 41-61 (ALGVEWVLRRMLLPCDKLLVS). At 62–88 (LGASHFCLQSVVMGKTIYVFLYPMAFP) the chain is on the extracellular side. A helical transmembrane segment spans residues 89–109 (YNPVLQFLAFQWDFLNAATLW). Residues 110-128 (FSTWLSVFYCVKIATFTHP) are Cytoplasmic-facing. A helical membrane pass occupies residues 129 to 149 (VFFWLKHKLSGWLPWMVFSYV). The Extracellular portion of the chain corresponds to 150 to 183 (GLSSFTTILFFIGNHRMYQNYLKNHLQPWNVTGN). N179 carries N-linked (GlcNAc...) asparagine glycosylation. A helical transmembrane segment spans residues 184 to 204 (SIRSYCEKFYLFPLKMITWTM). The Cytoplasmic portion of the chain corresponds to 205-234 (PTAVFFICMILLITSLGRHMKKALLTTSGF). Residues 235-255 (REPSVQAHIKALLALLSFAML) traverse the membrane as a helical segment. The Extracellular segment spans residues 256–264 (FISYFLSLV). The helical transmembrane segment at 265–285 (FSAAGIFPPLDFKFWVWESVI) threads the bilayer. The Cytoplasmic segment spans residues 286–318 (YLCAAVHPIILLFSNCRLRAVLKSRRSSRCGTP).

Belongs to the G-protein coupled receptor T2R family.

It localises to the membrane. Its function is as follows. Receptor that may play a role in the perception of bitterness and is gustducin-linked. May play a role in sensing the chemical composition of the gastrointestinal content. The activity of this receptor may stimulate alpha gustducin, mediate PLC-beta-2 activation and lead to the gating of TRPM5. This is Taste receptor type 2 member 60 (TAS2R60) from Pan troglodytes (Chimpanzee).